We begin with the raw amino-acid sequence, 307 residues long: Pantothenate kinase (307 aa).

90–97 (GSVAVGKS) contributes to the ATP binding site.

It belongs to the prokaryotic pantothenate kinase family.

It localises to the cytoplasm. The catalysed reaction is (R)-pantothenate + ATP = (R)-4'-phosphopantothenate + ADP + H(+). Its pathway is cofactor biosynthesis; coenzyme A biosynthesis; CoA from (R)-pantothenate: step 1/5. The sequence is that of Pantothenate kinase from Enterococcus faecalis (strain ATCC 700802 / V583).